The following is a 95-amino-acid chain: Aspartyl/glutamyl-tRNA(Asn/Gln) amidotransferase subunit C (95 aa).

Belongs to the GatC family. In terms of assembly, heterotrimer of A, B and C subunits.

The enzyme catalyses L-glutamyl-tRNA(Gln) + L-glutamine + ATP + H2O = L-glutaminyl-tRNA(Gln) + L-glutamate + ADP + phosphate + H(+). It carries out the reaction L-aspartyl-tRNA(Asn) + L-glutamine + ATP + H2O = L-asparaginyl-tRNA(Asn) + L-glutamate + ADP + phosphate + 2 H(+). Allows the formation of correctly charged Asn-tRNA(Asn) or Gln-tRNA(Gln) through the transamidation of misacylated Asp-tRNA(Asn) or Glu-tRNA(Gln) in organisms which lack either or both of asparaginyl-tRNA or glutaminyl-tRNA synthetases. The reaction takes place in the presence of glutamine and ATP through an activated phospho-Asp-tRNA(Asn) or phospho-Glu-tRNA(Gln). The polypeptide is Aspartyl/glutamyl-tRNA(Asn/Gln) amidotransferase subunit C (Shouchella clausii (strain KSM-K16) (Alkalihalobacillus clausii)).